The primary structure comprises 203 residues: UPF0637 protein SH1846 (203 aa).

It belongs to the UPF0637 family.

The chain is UPF0637 protein SH1846 from Staphylococcus haemolyticus (strain JCSC1435).